The chain runs to 546 residues: CTP synthase (546 aa).

Residues 1 to 269 (MNSNTKIIFV…DAKLVELLNL (269 aa)) form an amidoligase domain region. Position 16 (Ser-16) interacts with CTP. Ser-16 provides a ligand contact to UTP. ATP contacts are provided by residues 17–22 (SLGKGV) and Asp-74. Mg(2+) is bound by residues Asp-74 and Glu-143. Residues 150 to 152 (DIE), 190 to 195 (KTKPTQ), and Lys-226 contribute to the CTP site. UTP-binding positions include 190-195 (KTKPTQ) and Lys-226. The 253-residue stretch at 294 to 546 (TIAMVGKYVS…IQAAIENSNN (253 aa)) folds into the Glutamine amidotransferase type-1 domain. Gly-356 contributes to the L-glutamine binding site. Cys-383 functions as the Nucleophile; for glutamine hydrolysis in the catalytic mechanism. L-glutamine is bound by residues 384-387 (LGMQ), Glu-407, and Arg-474. Catalysis depends on residues His-519 and Glu-521.

Belongs to the CTP synthase family. Homotetramer.

The enzyme catalyses UTP + L-glutamine + ATP + H2O = CTP + L-glutamate + ADP + phosphate + 2 H(+). It catalyses the reaction L-glutamine + H2O = L-glutamate + NH4(+). It carries out the reaction UTP + NH4(+) + ATP = CTP + ADP + phosphate + 2 H(+). Its pathway is pyrimidine metabolism; CTP biosynthesis via de novo pathway; CTP from UDP: step 2/2. Allosterically activated by GTP, when glutamine is the substrate; GTP has no effect on the reaction when ammonia is the substrate. The allosteric effector GTP functions by stabilizing the protein conformation that binds the tetrahedral intermediate(s) formed during glutamine hydrolysis. Inhibited by the product CTP, via allosteric rather than competitive inhibition. Its function is as follows. Catalyzes the ATP-dependent amination of UTP to CTP with either L-glutamine or ammonia as the source of nitrogen. Regulates intracellular CTP levels through interactions with the four ribonucleotide triphosphates. The chain is CTP synthase from Francisella tularensis subsp. mediasiatica (strain FSC147).